A 129-amino-acid chain; its full sequence is Thylakoid-associated single-stranded DNA-binding protein slr1034 (129 aa).

Positions 1–100 constitute an SSB domain; sequence MNSFVLMATV…LTASRISLVD (100 aa). The interval 99–129 is disordered; sequence VDSGNGINPGELSSPPEPEAVDLSNTDDIPF.

In terms of assembly, homotetramer.

It is found in the cellular thylakoid membrane. In Synechocystis sp. (strain ATCC 27184 / PCC 6803 / Kazusa), this protein is Thylakoid-associated single-stranded DNA-binding protein slr1034.